The following is a 351-amino-acid chain: 7,8-didemethyl-8-hydroxy-5-deazariboflavin synthase (351 aa).

The Radical SAM core domain occupies 35 to 275 (ITYSKNAFIP…EDISIQVPPN (241 aa)). [4Fe-4S] cluster is bound by residues Cys-49, Cys-53, and Cys-56.

This sequence belongs to the radical SAM superfamily. CofG family. In terms of assembly, consists of two subunits, CofG and CofH. [4Fe-4S] cluster is required as a cofactor.

It catalyses the reaction 5-amino-5-(4-hydroxybenzyl)-6-(D-ribitylimino)-5,6-dihydrouracil + S-adenosyl-L-methionine = 7,8-didemethyl-8-hydroxy-5-deazariboflavin + 5'-deoxyadenosine + L-methionine + NH4(+) + H(+). It participates in cofactor biosynthesis; coenzyme F0 biosynthesis. In terms of biological role, catalyzes the radical-mediated synthesis of 7,8-didemethyl-8-hydroxy-5-deazariboflavin from 5-amino-5-(4-hydroxybenzyl)-6-(D-ribitylimino)-5,6-dihydrouracil. The chain is 7,8-didemethyl-8-hydroxy-5-deazariboflavin synthase from Methanococcus vannielii (strain ATCC 35089 / DSM 1224 / JCM 13029 / OCM 148 / SB).